A 353-amino-acid chain; its full sequence is Fasciclin-like arabinogalactan protein 21 (353 aa).

A signal peptide spans 1 to 28 (MGCCSSDCFVYFILSIALAFMAISTTLR). 6 N-linked (GlcNAc...) asparagine glycosylation sites follow: Asn-51, Asn-81, Asn-94, Asn-200, Asn-249, and Asn-315. Positions 83-181 (TLFAIEDASF…HGVIGPFSPL (99 aa)) constitute an FAS1 1 domain. Positions 254-352 (TILATPNLVS…GISHTLEIPH (99 aa)) constitute an FAS1 2 domain.

The protein belongs to the fasciclin-like AGP family.

The protein resides in the secreted. Functionally, may be a cell surface adhesion protein. The chain is Fasciclin-like arabinogalactan protein 21 (FLA21) from Arabidopsis thaliana (Mouse-ear cress).